The sequence spans 113 residues: UPF0145 protein TK1926 (113 aa).

The protein belongs to the UPF0145 family.

In Thermococcus kodakarensis (strain ATCC BAA-918 / JCM 12380 / KOD1) (Pyrococcus kodakaraensis (strain KOD1)), this protein is UPF0145 protein TK1926.